A 148-amino-acid polypeptide reads, in one-letter code: Phospholipase A2-alpha (148 aa).

A signal peptide spans 1–20 (MAAPIILFSFLLFFSVSVSA). Cystine bridges form between Cys38–Cys66, Cys42–Cys72, Cys47–Cys122, Cys59–Cys79, Cys78–Cys105, and Cys85–Cys98. The Ca(2+) site is built by Tyr58, Gly60, and Tyr63. His82 is an active-site residue. Asp83 contributes to the Ca(2+) binding site.

It belongs to the phospholipase A2 family. Interacts with MYB30. It depends on Ca(2+) as a cofactor. As to expression, ubiquitous but expressed at a low level.

It is found in the secreted. Its subcellular location is the golgi apparatus. It localises to the cytoplasmic vesicle. The protein resides in the nucleus. The catalysed reaction is a 1,2-diacyl-sn-glycero-3-phosphocholine + H2O = a 1-acyl-sn-glycero-3-phosphocholine + a fatty acid + H(+). Functionally, PA2 catalyzes the calcium-dependent hydrolysis of the 2-acyl groups in 3-sn-phosphoglycerides. Releases lysophospholipids (LPLs) and free fatty acids (FFAs) from membrane phospholipids in response to hormones and other external stimuli. Modulates the trafficking of PIN proteins to the plasma membrane. Negatively regulates MYB30 transcriptional activity and hypersensitive response control. The chain is Phospholipase A2-alpha from Arabidopsis thaliana (Mouse-ear cress).